Consider the following 587-residue polypeptide: Phosphatidylinositol-3-phosphatase SAC1 (587 aa).

Residues 1–520 lie on the Cytoplasmic side of the membrane; the sequence is MATAAYEQLK…SPLSVPRDWK (520 aa). An SAC domain is found at 122 to 451; it reads LNHVLNVDGF…ANACAKQYAG (330 aa). The interval 452-587 is essential for phosphatidylinositol-4-phosphate phosphatase activity; it reads TGALKTDFTR…PRLVQKEKID (136 aa). Position 456 is an N6-acetyllysine (K456). Residues 521–541 traverse the membrane as a helical segment; the sequence is FLALPIIMVVAFSMCIICLLM. Residues 542–548 lie on the Lumenal side of the membrane; sequence AGDTWTE. Residues 549-569 form a helical membrane-spanning segment; that stretch reads TLAYVLFWGVASIGTFFIILY. The Cytoplasmic segment spans residues 570–587; it reads NGKDFVDAPRLVQKEKID.

Interacts with TMEM39A. Interacts with SEC23A and SEC24A; this interaction is reduced in the absence of TMEM39A. Interacts with PLEKHA3 and VAPA and/or VAPB to form a ternary complex.

It is found in the endoplasmic reticulum membrane. The protein resides in the golgi apparatus membrane. The catalysed reaction is a 1,2-diacyl-sn-glycero-3-phospho-(1D-myo-inositol-3-phosphate) + H2O = a 1,2-diacyl-sn-glycero-3-phospho-(1D-myo-inositol) + phosphate. The enzyme catalyses a 1,2-diacyl-sn-glycero-3-phospho-(1D-myo-inositol 4-phosphate) + H2O = a 1,2-diacyl-sn-glycero-3-phospho-(1D-myo-inositol) + phosphate. Its function is as follows. Phosphoinositide phosphatase which catalyzes the hydrolysis of phosphatidylinositol 4-phosphate (PtdIns(4)P), phosphatidylinositol 3-phosphate (PtdIns(3)P) and has low activity towards phosphatidylinositol-3,5-bisphosphate (PtdIns(3,5)P2). Shows a very robust PtdIns(4)P phosphatase activity when it binds PtdIns(4)P in a 'cis' configuration in the cellular environment, with much less activity seen when it binds PtdIns(4)P in 'trans' configuration. PtdIns(4)P phosphatase activity (when it binds PtdIns(4)P in 'trans' configuration) is enhanced in the presence of PLEKHA3. The protein is Phosphatidylinositol-3-phosphatase SAC1 (SACM1L) of Pongo abelii (Sumatran orangutan).